The primary structure comprises 139 residues: Small ribosomal subunit protein uS9 (139 aa).

Belongs to the universal ribosomal protein uS9 family.

This is Small ribosomal subunit protein uS9 from Coxiella burnetii (strain CbuK_Q154) (Coxiella burnetii (strain Q154)).